The following is a 380-amino-acid chain: MEKNKMVSQGNQEPTATPDTMVQPFAAIPFPPPPQNGLSTDYGSQHTQEYATQSTEHGIPLYGGGQSHAEHSTPATSTANASSTTDGSQTEGQQSQTQNSENSESKPTPKRLHVSNIPFRFRDPDLRQMFGQFGKILDVEIIFNERGSKGFGFVTFETSADADRAREKLHSTVVEGRKIEVNNATARVMTNKKSVTPYGNGWKLSPVVGAVYGPELYAAAPGLQADVSLATEAGVPLPGPRGVNTYIPLIIPGFPYPTAAAAATTAAAFRGAHLRGRGRTVYGAVRAVPPTAIPTYPGVLYQDGFYGTELYGGYAAYRYTQPATAATAATAAAAAAAAYSDGYGRVYTADPYHALAPATSYGVGAVASLYRGGYSRFAPY.

Composition is skewed to polar residues over residues 1–20 (MEKN…TPDT) and 36–56 (NGLS…QSTE). Residues 1–117 (MEKNKMVSQG…TPKRLHVSNI (117 aa)) are disordered. The segment covering 72–102 (STPATSTANASSTTDGSQTEGQQSQTQNSEN) has biased composition (low complexity). Residues 110-186 (KRLHVSNIPF…RKIEVNNATA (77 aa)) enclose the RRM domain.

The protein localises to the nucleus. The protein resides in the cytoplasm. RNA-binding protein that regulates alternative splicing events by binding to 5'-UGCAUGU-3' elements. Regulates alternative splicing of tissue-specific exons. The chain is RNA binding protein fox-1 homolog 2 (rbfox2) from Xenopus tropicalis (Western clawed frog).